Consider the following 91-residue polypeptide: MTKELCMRCYISGRVQGVWFRASAKNLAEQLMISGWARNLADGRVEVFACGKEDKLEEFYTWLQKGPLNARVDVCTRENLPWEDYITFDVL.

In terms of domain architecture, Acylphosphatase-like spans Cys-6 to Leu-91. Catalysis depends on residues Arg-21 and Asn-39.

This sequence belongs to the acylphosphatase family.

The enzyme catalyses an acyl phosphate + H2O = a carboxylate + phosphate + H(+). The protein is Acylphosphatase (acyP) of Legionella pneumophila (strain Lens).